We begin with the raw amino-acid sequence, 119 residues long: NADH-quinone oxidoreductase subunit A (119 aa).

The next 3 helical transmembrane spans lie at 9 to 29 (VILF…LGFL), 63 to 83 (LVAI…PWAV), and 88 to 108 (IGAT…VGFV).

The protein belongs to the complex I subunit 3 family. As to quaternary structure, NDH-1 is composed of 14 different subunits. Subunits NuoA, H, J, K, L, M, N constitute the membrane sector of the complex.

It is found in the cell inner membrane. The enzyme catalyses a quinone + NADH + 5 H(+)(in) = a quinol + NAD(+) + 4 H(+)(out). Functionally, NDH-1 shuttles electrons from NADH, via FMN and iron-sulfur (Fe-S) centers, to quinones in the respiratory chain. The immediate electron acceptor for the enzyme in this species is believed to be ubiquinone. Couples the redox reaction to proton translocation (for every two electrons transferred, four hydrogen ions are translocated across the cytoplasmic membrane), and thus conserves the redox energy in a proton gradient. The sequence is that of NADH-quinone oxidoreductase subunit A from Leptothrix cholodnii (strain ATCC 51168 / LMG 8142 / SP-6) (Leptothrix discophora (strain SP-6)).